A 214-amino-acid chain; its full sequence is A-type ATP synthase subunit D (214 aa).

The protein belongs to the V-ATPase D subunit family. In terms of assembly, has multiple subunits with at least A(3), B(3), C, D, E, F, H, I and proteolipid K(x).

It is found in the cell membrane. Functionally, component of the A-type ATP synthase that produces ATP from ADP in the presence of a proton gradient across the membrane. The protein is A-type ATP synthase subunit D of Pyrococcus horikoshii (strain ATCC 700860 / DSM 12428 / JCM 9974 / NBRC 100139 / OT-3).